The chain runs to 354 residues: MKFIAPIALLGMFQAASASPVDIKTSNAGLQVTLSQINNTRIKAVVQNTGSEEVTFMHMNFFKDASPVKKVSIFRNNDEVEFQGIKYRVQTDDLSDEVLTSLAPGASFEDEFDIAATSDLSSGGPVTIRSEGIVPLVTEKSVTGSLSYSSNELTIDVDGAEAAKIETVGAQLSKLSKRTRVSSCSGTRATALQTALRNAASLASRAASAASQGGSTFTTFFKSDSSSTRNAVAARLRAVASESSSTSSGSTTYYCTDVYGYCSSNVLAYTLPAYNIIANCDIYYTYLPALTGTCYAQDQATTTLHEFTHAPGVYSPGTDDLGYGYDAATRLSASQALNNADSYALYANAVYLGC.

An N-terminal signal peptide occupies residues 1-19 (MKFIAPIALLGMFQAASAS). The propeptide occupies 20-178 (PVDIKTSNAG…GAQLSKLSKR (159 aa)). 2 disulfide bridges follow: Cys184-Cys255 and Cys262-Cys280. His305 contacts Zn(2+). Residue Glu306 is part of the active site. Zn(2+)-binding residues include His309 and Asp320.

Belongs to the peptidase M35 family. Zn(2+) serves as cofactor.

Its subcellular location is the secreted. The catalysed reaction is Preferential cleavage of bonds with hydrophobic residues in P1'. Also 3-Asn-|-Gln-4 and 8-Gly-|-Ser-9 bonds in insulin B chain.. Functionally, secreted metalloproteinase that allows assimilation of proteinaceous substrates. Shows high activities on basic nuclear substrates such as histone and protamine. The chain is Neutral protease 2 homolog AN7962 from Emericella nidulans (strain FGSC A4 / ATCC 38163 / CBS 112.46 / NRRL 194 / M139) (Aspergillus nidulans).